A 676-amino-acid polypeptide reads, in one-letter code: Symportin 1 (676 aa).

The segment covering 1–10 (MGKTRRNRVR) has biased composition (basic residues). The interval 1-28 (MGKTRRNRVRNRTDPIAKPVKPPTDPEL) is disordered. One copy of the ARM 1 repeat lies at 183–216 (TILRLLFRLISADIAPQDIYEEAISCLTTLSEDN). The disordered stretch occupies residues 325–385 (KGNQGSRESP…EDDEDDDDDS (61 aa)). Composition is skewed to acidic residues over residues 338–354 (ADEE…DAMD) and 363–385 (EDQE…DDDS). An ARM 2 repeat occupies 420–453 (TAVPQLIRLSNLPIDSDESLTIQSHALSALNNIS).

Belongs to the nuclear import and ribosome assembly adapter family. In terms of assembly, component of a hexameric 5S RNP precursor complex, composed of 5S RNA, RRS1, RPF2, RPL5, RPL11 and SYO1; this complex acts as a precursor for ribosome assembly.

In terms of biological role, involved in ribosomal large subunit assembly. The sequence is that of Symportin 1 from Chaetomium thermophilum (strain DSM 1495 / CBS 144.50 / IMI 039719) (Thermochaetoides thermophila).